The sequence spans 365 residues: Peptide chain release factor 2 (365 aa).

N5-methylglutamine is present on Gln252.

Belongs to the prokaryotic/mitochondrial release factor family. Methylated by PrmC. Methylation increases the termination efficiency of RF2.

The protein localises to the cytoplasm. Functionally, peptide chain release factor 2 directs the termination of translation in response to the peptide chain termination codons UGA and UAA. The chain is Peptide chain release factor 2 from Aeromonas salmonicida (strain A449).